The chain runs to 113 residues: Ribonuclease P protein component (113 aa).

It belongs to the RnpA family. As to quaternary structure, consists of a catalytic RNA component (M1 or rnpB) and a protein subunit.

It catalyses the reaction Endonucleolytic cleavage of RNA, removing 5'-extranucleotides from tRNA precursor.. Functionally, RNaseP catalyzes the removal of the 5'-leader sequence from pre-tRNA to produce the mature 5'-terminus. It can also cleave other RNA substrates such as 4.5S RNA. The protein component plays an auxiliary but essential role in vivo by binding to the 5'-leader sequence and broadening the substrate specificity of the ribozyme. In Geotalea uraniireducens (strain Rf4) (Geobacter uraniireducens), this protein is Ribonuclease P protein component.